The primary structure comprises 174 residues: Crossover junction endodeoxyribonuclease RuvC (174 aa).

Catalysis depends on residues Asp-8, Glu-68, and Asp-140. Positions 8, 68, and 140 each coordinate Mg(2+).

Belongs to the RuvC family. In terms of assembly, homodimer which binds Holliday junction (HJ) DNA. The HJ becomes 2-fold symmetrical on binding to RuvC with unstacked arms; it has a different conformation from HJ DNA in complex with RuvA. In the full resolvosome a probable DNA-RuvA(4)-RuvB(12)-RuvC(2) complex forms which resolves the HJ. Mg(2+) is required as a cofactor.

Its subcellular location is the cytoplasm. It catalyses the reaction Endonucleolytic cleavage at a junction such as a reciprocal single-stranded crossover between two homologous DNA duplexes (Holliday junction).. Its function is as follows. The RuvA-RuvB-RuvC complex processes Holliday junction (HJ) DNA during genetic recombination and DNA repair. Endonuclease that resolves HJ intermediates. Cleaves cruciform DNA by making single-stranded nicks across the HJ at symmetrical positions within the homologous arms, yielding a 5'-phosphate and a 3'-hydroxyl group; requires a central core of homology in the junction. The consensus cleavage sequence is 5'-(A/T)TT(C/G)-3'. Cleavage occurs on the 3'-side of the TT dinucleotide at the point of strand exchange. HJ branch migration catalyzed by RuvA-RuvB allows RuvC to scan DNA until it finds its consensus sequence, where it cleaves and resolves the cruciform DNA. In Legionella pneumophila (strain Lens), this protein is Crossover junction endodeoxyribonuclease RuvC.